Consider the following 148-residue polypeptide: Myosin light chain 3, skeletal muscle isoform (148 aa).

N-acetylthreonine is present on Thr1. EF-hand domains follow at residues 6–41 (DQIEDFKEAFGLFDRIGDSQVAFNQVADIMRALGQN) and 82–117 (GTYDDYVEGLRVFDKEGNGTVMGAELRIVLSTLGEK).

As to quaternary structure, myosin is a hexamer of 2 heavy chains and 4 light chains.

In Chelon ramada (Thin-lipped grey mullet), this protein is Myosin light chain 3, skeletal muscle isoform.